The chain runs to 701 residues: Ribosomal RNA large subunit methyltransferase K/L (701 aa).

The region spanning 43–154 (LLYQSLMWSR…KETAHISLDL (112 aa)) is the THUMP domain.

It belongs to the methyltransferase superfamily. RlmKL family.

The protein localises to the cytoplasm. It catalyses the reaction guanosine(2445) in 23S rRNA + S-adenosyl-L-methionine = N(2)-methylguanosine(2445) in 23S rRNA + S-adenosyl-L-homocysteine + H(+). It carries out the reaction guanosine(2069) in 23S rRNA + S-adenosyl-L-methionine = N(2)-methylguanosine(2069) in 23S rRNA + S-adenosyl-L-homocysteine + H(+). Functionally, specifically methylates the guanine in position 2445 (m2G2445) and the guanine in position 2069 (m7G2069) of 23S rRNA. The chain is Ribosomal RNA large subunit methyltransferase K/L from Klebsiella pneumoniae (strain 342).